Consider the following 612-residue polypeptide: UBA domain-containing protein 6 (612 aa).

A UBA domain is found at 3-42; it reads DLDTKIKTLKNMGVSESDAKDSLERCGYDVESAAEFIFSG. Residue Ser-595 is modified to Phosphoserine.

It localises to the cytoplasm. The protein resides in the nucleus. This is UBA domain-containing protein 6 (ucp6) from Schizosaccharomyces pombe (strain 972 / ATCC 24843) (Fission yeast).